The chain runs to 421 residues: UDP-N-acetylglucosamine 1-carboxyvinyltransferase 1 (421 aa).

22–23 (KN) contacts phosphoenolpyruvate. Arg95 lines the UDP-N-acetyl-alpha-D-glucosamine pocket. Cys119 serves as the catalytic Proton donor. Position 119 is a 2-(S-cysteinyl)pyruvic acid O-phosphothioketal (Cys119). UDP-N-acetyl-alpha-D-glucosamine is bound by residues 124 to 128 (RPIEQ), Asp308, and Val330.

This sequence belongs to the EPSP synthase family. MurA subfamily.

It is found in the cytoplasm. The catalysed reaction is phosphoenolpyruvate + UDP-N-acetyl-alpha-D-glucosamine = UDP-N-acetyl-3-O-(1-carboxyvinyl)-alpha-D-glucosamine + phosphate. It participates in cell wall biogenesis; peptidoglycan biosynthesis. In terms of biological role, cell wall formation. Adds enolpyruvyl to UDP-N-acetylglucosamine. This is UDP-N-acetylglucosamine 1-carboxyvinyltransferase 1 from Staphylococcus aureus (strain MRSA252).